We begin with the raw amino-acid sequence, 507 residues long: Microcystinase C (507 aa).

Positions Met-1–Gly-21 are cleaved as a signal peptide. The Zn(2+) site is built by Asp-167, His-169, and His-191.

Belongs to the peptidase M81 family. It depends on Zn(2+) as a cofactor.

Its activity is regulated as follows. Inhibited by the metal chelators EDTA and 1,10-phenanthroline. Its function is as follows. Involved in peptidolytic degradation of cyclic heptapeptide hepatotoxin microcystin (MC). Cleaves both linear MC and the tetrapeptide degradation product of MC. Cleaves the Adda-Glu peptide bond of linear MC heptapeptides. The sequence is that of Microcystinase C from Sphingomonas sp.